The chain runs to 167 residues: Ion-translocating oxidoreductase complex subunit B (167 aa).

The hydrophobic stretch occupies residues 1–22 (MITLIIFSFLSFLLGIILSFTA). In terms of domain architecture, 4Fe-4S spans 28–87 (QEDPIVEIVNELLPQSQCAQCGYSGCYPYAKAIVENSEKINKCIPGGTDLISAISSVLSI). 12 residues coordinate [4Fe-4S] cluster: Cys45, Cys48, Cys53, Cys70, Cys113, Cys116, Cys119, Cys123, Cys143, Cys146, Cys149, and Cys153. 4Fe-4S ferredoxin-type domains are found at residues 104–133 (NTVLINESNCVGCSKCASFCPVDAIVGAPN) and 134–163 (FIHTVLQEFCTGCNICLLHCPTNCIEIKKE).

This sequence belongs to the 4Fe4S bacterial-type ferredoxin family. RnfB subfamily. The complex is composed of six subunits: RnfA, RnfB, RnfC, RnfD, RnfE and RnfG. [4Fe-4S] cluster serves as cofactor.

The protein resides in the cell inner membrane. In terms of biological role, part of a membrane-bound complex that couples electron transfer with translocation of ions across the membrane. This chain is Ion-translocating oxidoreductase complex subunit B, found in Buchnera aphidicola subsp. Acyrthosiphon pisum (strain Tuc7).